Consider the following 154-residue polypeptide: Xanthine-guanine phosphoribosyltransferase (154 aa).

5-phospho-alpha-D-ribose 1-diphosphate-binding positions include 38-39 (RG), Lys-71, and 90-98 (DDLVDTGGT). Lys-71 is a binding site for GMP. Position 91 (Asp-91) interacts with Mg(2+). The guanine site is built by Asp-94 and Ile-137. 2 residues coordinate xanthine: Asp-94 and Ile-137. GMP is bound by residues 94 to 98 (DTGGT) and 136 to 137 (WI).

This sequence belongs to the purine/pyrimidine phosphoribosyltransferase family. XGPT subfamily. As to quaternary structure, homotetramer. Mg(2+) serves as cofactor.

It localises to the cell inner membrane. The enzyme catalyses GMP + diphosphate = guanine + 5-phospho-alpha-D-ribose 1-diphosphate. It carries out the reaction XMP + diphosphate = xanthine + 5-phospho-alpha-D-ribose 1-diphosphate. It catalyses the reaction IMP + diphosphate = hypoxanthine + 5-phospho-alpha-D-ribose 1-diphosphate. The protein operates within purine metabolism; GMP biosynthesis via salvage pathway; GMP from guanine: step 1/1. It participates in purine metabolism; XMP biosynthesis via salvage pathway; XMP from xanthine: step 1/1. In terms of biological role, purine salvage pathway enzyme that catalyzes the transfer of the ribosyl-5-phosphate group from 5-phospho-alpha-D-ribose 1-diphosphate (PRPP) to the N9 position of the 6-oxopurines guanine and xanthine to form the corresponding ribonucleotides GMP (guanosine 5'-monophosphate) and XMP (xanthosine 5'-monophosphate), with the release of PPi. To a lesser extent, also acts on hypoxanthine. In Buchnera aphidicola subsp. Schizaphis graminum (strain Sg), this protein is Xanthine-guanine phosphoribosyltransferase.